The primary structure comprises 302 residues: N-acetylmuramic acid 6-phosphate etherase (302 aa).

The SIS domain maps to 58–221 (IGESFLNGGR…STGAMVKTGK (164 aa)). E86 functions as the Proton donor in the catalytic mechanism. E117 is a catalytic residue.

Belongs to the GCKR-like family. MurNAc-6-P etherase subfamily. As to quaternary structure, homodimer.

The enzyme catalyses N-acetyl-D-muramate 6-phosphate + H2O = N-acetyl-D-glucosamine 6-phosphate + (R)-lactate. The protein operates within amino-sugar metabolism; N-acetylmuramate degradation. Specifically catalyzes the cleavage of the D-lactyl ether substituent of MurNAc 6-phosphate, producing GlcNAc 6-phosphate and D-lactate. The polypeptide is N-acetylmuramic acid 6-phosphate etherase (Clostridium botulinum (strain Langeland / NCTC 10281 / Type F)).